We begin with the raw amino-acid sequence, 146 residues long: UPF0735 ACT domain-containing protein Cbei_1295 (146 aa).

Positions 70–145 constitute an ACT domain; that stretch reads TYNIIFKNEK…NVEKVEFIGM (76 aa).

It belongs to the UPF0735 family.

The chain is UPF0735 ACT domain-containing protein Cbei_1295 from Clostridium beijerinckii (strain ATCC 51743 / NCIMB 8052) (Clostridium acetobutylicum).